Reading from the N-terminus, the 183-residue chain is Peptidyl-tRNA hydrolase (183 aa).

A tRNA-binding site is contributed by Tyr14. The Proton acceptor role is filled by His19. Residues Tyr55 and Asn57 each coordinate tRNA.

This sequence belongs to the PTH family. Monomer.

Its subcellular location is the cytoplasm. It catalyses the reaction an N-acyl-L-alpha-aminoacyl-tRNA + H2O = an N-acyl-L-amino acid + a tRNA + H(+). Its function is as follows. Hydrolyzes ribosome-free peptidyl-tRNAs (with 1 or more amino acids incorporated), which drop off the ribosome during protein synthesis, or as a result of ribosome stalling. Functionally, catalyzes the release of premature peptidyl moieties from peptidyl-tRNA molecules trapped in stalled 50S ribosomal subunits, and thus maintains levels of free tRNAs and 50S ribosomes. This Thermus thermophilus (strain ATCC BAA-163 / DSM 7039 / HB27) protein is Peptidyl-tRNA hydrolase.